Reading from the N-terminus, the 287-residue chain is ATP synthase subunit a (287 aa).

Helical transmembrane passes span 37–57 (LDSVAVSVILGVLGLFVMWLA), 96–116 (FIAPLALTVFVWIFLMNAMDL), 144–164 (DLSTTLGLSSAVLILCFVYSI), 187–207 (PVFALILGVVNLLMQIIEYVA), 224–244 (ELVFMLIALMGGAAAMSLSGV), and 266–286 (TLQAFIFMMLTLIYLGQAHEA).

Belongs to the ATPase A chain family. As to quaternary structure, F-type ATPases have 2 components, CF(1) - the catalytic core - and CF(0) - the membrane proton channel. CF(1) has five subunits: alpha(3), beta(3), gamma(1), delta(1), epsilon(1). CF(0) has three main subunits: a(1), b(2) and c(9-12). The alpha and beta chains form an alternating ring which encloses part of the gamma chain. CF(1) is attached to CF(0) by a central stalk formed by the gamma and epsilon chains, while a peripheral stalk is formed by the delta and b chains.

The protein localises to the cell inner membrane. Functionally, key component of the proton channel; it plays a direct role in the translocation of protons across the membrane. This chain is ATP synthase subunit a, found in Acidovorax ebreus (strain TPSY) (Diaphorobacter sp. (strain TPSY)).